A 182-amino-acid polypeptide reads, in one-letter code: Large ribosomal subunit protein uL5 (182 aa).

This sequence belongs to the universal ribosomal protein uL5 family. In terms of assembly, part of the 50S ribosomal subunit; part of the 5S rRNA/L5/L18/L25 subcomplex. Contacts the 5S rRNA and the P site tRNA. Forms a bridge to the 30S subunit in the 70S ribosome.

This is one of the proteins that bind and probably mediate the attachment of the 5S RNA into the large ribosomal subunit, where it forms part of the central protuberance. In the 70S ribosome it contacts protein S13 of the 30S subunit (bridge B1b), connecting the 2 subunits; this bridge is implicated in subunit movement. Contacts the P site tRNA; the 5S rRNA and some of its associated proteins might help stabilize positioning of ribosome-bound tRNAs. In Acidobacterium capsulatum (strain ATCC 51196 / DSM 11244 / BCRC 80197 / JCM 7670 / NBRC 15755 / NCIMB 13165 / 161), this protein is Large ribosomal subunit protein uL5.